A 954-amino-acid polypeptide reads, in one-letter code: Valine--tRNA ligase (954 aa).

Positions 48–58 match the 'HIGH' region motif; sequence PNVTGSLHMGH. Positions 560-564 match the 'KMSKS' region motif; the sequence is KMSKS. Position 563 (lysine 563) interacts with ATP. Residues 883 to 953 adopt a coiled-coil conformation; it reads AGFINKEAEL…IQEQYKAIEA (71 aa).

This sequence belongs to the class-I aminoacyl-tRNA synthetase family. ValS type 1 subfamily. As to quaternary structure, monomer.

The protein localises to the cytoplasm. It carries out the reaction tRNA(Val) + L-valine + ATP = L-valyl-tRNA(Val) + AMP + diphosphate. Its function is as follows. Catalyzes the attachment of valine to tRNA(Val). As ValRS can inadvertently accommodate and process structurally similar amino acids such as threonine, to avoid such errors, it has a 'posttransfer' editing activity that hydrolyzes mischarged Thr-tRNA(Val) in a tRNA-dependent manner. The polypeptide is Valine--tRNA ligase (Haemophilus influenzae (strain PittEE)).